A 363-amino-acid polypeptide reads, in one-letter code: NADH-quinone oxidoreductase subunit H (363 aa).

The next 10 membrane-spanning stretches (helical) occupy residues 29 to 49 (VLKI…YVVW), 62 to 82 (GPMY…KLLF), 94 to 114 (AIFV…WAVV), 127 to 147 (VGLL…ILAG), 166 to 186 (VVSY…AAGS), 202 to 222 (FFDW…VSGV), 239 to 257 (IVAG…LFFL), 264 to 286 (ILVS…QGWV), 293 to 313 (LIDW…LFFA), and 339 to 359 (FIPL…SGVI).

This sequence belongs to the complex I subunit 1 family. As to quaternary structure, NDH-1 is composed of 14 different subunits. Subunits NuoA, H, J, K, L, M, N constitute the membrane sector of the complex.

Its subcellular location is the cell inner membrane. It catalyses the reaction a quinone + NADH + 5 H(+)(in) = a quinol + NAD(+) + 4 H(+)(out). NDH-1 shuttles electrons from NADH, via FMN and iron-sulfur (Fe-S) centers, to quinones in the respiratory chain. The immediate electron acceptor for the enzyme in this species is believed to be ubiquinone. Couples the redox reaction to proton translocation (for every two electrons transferred, four hydrogen ions are translocated across the cytoplasmic membrane), and thus conserves the redox energy in a proton gradient. This subunit may bind ubiquinone. This is NADH-quinone oxidoreductase subunit H from Xylella fastidiosa (strain Temecula1 / ATCC 700964).